A 130-amino-acid polypeptide reads, in one-letter code: uncharacterized protein (130 aa).

Residues 1 to 28 (MELAKERNGPHQKHHGQCQNHCTSPNTV) form a disordered region. A compositionally biased stretch (polar residues) spans 17–28 (QCQNHCTSPNTV).

This is an uncharacterized protein from Saccharomyces cerevisiae (strain ATCC 204508 / S288c) (Baker's yeast).